The chain runs to 976 residues: Probable outer membrane protein PmpA (976 aa).

The N-terminal stretch at methionine 1–alanine 50 is a signal peptide. The region spanning glycine 671–phenylalanine 976 is the Autotransporter domain.

Belongs to the PMP outer membrane protein family.

It localises to the secreted. Its subcellular location is the cell wall. The protein localises to the cell outer membrane. The polypeptide is Probable outer membrane protein PmpA (pmpA) (Chlamydia muridarum (strain MoPn / Nigg)).